The chain runs to 155 residues: MPEAGAILPDGTVLGFDVGSRRIGVAVGTALGAGARAVAVINVHASGPDWDALDRVHKEWRPDGLVVGDPLTLDDKHQPARKRAHAFARQLRERYALPVVLIDERSSSVEAAQRFARERADGRKRRRDAEALDAMAAAVIVERWLAAPDQATLLP.

This sequence belongs to the YqgF nuclease family.

It localises to the cytoplasm. Could be a nuclease involved in processing of the 5'-end of pre-16S rRNA. This Xanthomonas oryzae pv. oryzae (strain MAFF 311018) protein is Putative pre-16S rRNA nuclease.